We begin with the raw amino-acid sequence, 298 residues long: HTH-type transcriptional regulator CzcR (298 aa).

In terms of domain architecture, HTH lysR-type spans 11 to 68 (MELRDLQIFQSVADQGSVSSAAKELNYVQSNVTARIKQLENELKTPLFYRHKRGMTLT). The segment at residues 28 to 47 (VSSAAKELNYVQSNVTARIK) is a DNA-binding region (H-T-H motif).

The protein belongs to the LysR transcriptional regulatory family.

The polypeptide is HTH-type transcriptional regulator CzcR (czcR) (Bacillus thuringiensis (strain Al Hakam)).